The primary structure comprises 20 residues: Short cationic peptide-3a (20 aa).

Glutamate 20 carries the post-translational modification Glutamic acid 1-amide.

Expressed by the venom gland.

It is found in the secreted. This chain is Short cationic peptide-3a, found in Cupiennius salei (American wandering spider).